The sequence spans 806 residues: Fibroblast growth factor receptor 3 (806 aa).

A signal peptide spans 1 to 19; sequence MRAAWGSVWCLCLAAAVGA. Topologically, residues 20-364 are extracellular; that stretch reads LPAARRRGAE…ELMEMDDSGS (345 aa). Residues 24–124 enclose the Ig-like C2-type 1 domain; it reads RRRGAERSGG…VLGNFTVRVT (101 aa). A disulfide bond links cysteine 61 and cysteine 107. N-linked (GlcNAc...) asparagine glycans are attached at residues asparagine 83, asparagine 96, and asparagine 118. Residues 121 to 146 form a disordered region; that stretch reads VRVTDSPSSGDDEDDDDESEDTGVPF. Acidic residues predominate over residues 130–141; sequence GDDEDDDDESED. Ig-like C2-type domains follow at residues 150–238 and 247–349; these read PDKM…YQLD and PILQ…AWLT. A disulfide bridge connects residues cysteine 170 and cysteine 222. Residues asparagine 219, asparagine 256, asparagine 288, asparagine 309, and asparagine 322 are each glycosylated (N-linked (GlcNAc...) asparagine). The cysteines at positions 269 and 333 are disulfide-linked. Residues 365–389 traverse the membrane as a helical segment; that stretch reads VYAGILSYGTGLVLFILVLVIVIIC. The Cytoplasmic segment spans residues 390-806; it reads RMKMPNKKAM…HVPCNGVIRT (417 aa). Residues 466-755 enclose the Protein kinase domain; the sequence is LTLGKPLGEG…LTMTSTDEYL (290 aa). ATP contacts are provided by residues 472–480 and lysine 502; that span reads LGEGCFGQV. The Proton acceptor role is filled by aspartate 611. 4 positions are modified to phosphotyrosine; by autocatalysis: tyrosine 641, tyrosine 642, tyrosine 718, and tyrosine 754.

This sequence belongs to the protein kinase superfamily. Tyr protein kinase family. Fibroblast growth factor receptor subfamily. In terms of assembly, monomer. Homodimer after ligand binding. In terms of processing, autophosphorylated. Binding of FGF family members together with heparan sulfate proteoglycan or heparin promotes receptor dimerization and autophosphorylation on tyrosine residues. Autophosphorylation occurs in trans between the two FGFR molecules present in the dimer.

The protein resides in the cell membrane. It catalyses the reaction L-tyrosyl-[protein] + ATP = O-phospho-L-tyrosyl-[protein] + ADP + H(+). Present in an inactive conformation in the absence of bound ligand. Ligand binding leads to dimerization and activation by autophosphorylation on tyrosine residues. Its function is as follows. Tyrosine-protein kinase that acts as a cell-surface receptor for fibroblast growth factors and plays an essential role in the regulation of cell proliferation, differentiation and apoptosis. Plays an essential role in the regulation of chondrocyte differentiation, proliferation and apoptosis, and is required for normal skeleton development. Regulates both osteogenesis and postnatal bone mineralization by osteoblasts. Promotes apoptosis in chondrocytes, but can also promote cancer cell proliferation. Phosphorylates PLCG1, CBL and FRS2. Ligand binding leads to the activation of several signaling cascades. Activation of PLCG1 leads to the production of the cellular signaling molecules diacylglycerol and inositol 1,4,5-trisphosphate. Phosphorylation of FRS2 triggers recruitment of GRB2, GAB1, PIK3R1 and SOS1, and mediates activation of RAS, MAPK1/ERK2, MAPK3/ERK1 and the MAP kinase signaling pathway, as well as of the AKT1 signaling pathway. The chain is Fibroblast growth factor receptor 3 (FGFR3) from Gallus gallus (Chicken).